Here is a 254-residue protein sequence, read N- to C-terminus: Triosephosphate isomerase (254 aa).

A substrate-binding site is contributed by 12–14 (NWK). His-99 serves as the catalytic Electrophile. Glu-169 acts as the Proton acceptor in catalysis. Substrate-binding positions include Gly-175, Ser-214, and 235–236 (GG).

This sequence belongs to the triosephosphate isomerase family. In terms of assembly, homodimer.

It is found in the cytoplasm. It carries out the reaction D-glyceraldehyde 3-phosphate = dihydroxyacetone phosphate. It functions in the pathway carbohydrate biosynthesis; gluconeogenesis. The protein operates within carbohydrate degradation; glycolysis; D-glyceraldehyde 3-phosphate from glycerone phosphate: step 1/1. In terms of biological role, involved in the gluconeogenesis. Catalyzes stereospecifically the conversion of dihydroxyacetone phosphate (DHAP) to D-glyceraldehyde-3-phosphate (G3P). The chain is Triosephosphate isomerase from Xanthobacter autotrophicus (strain ATCC BAA-1158 / Py2).